Reading from the N-terminus, the 375-residue chain is SAP-like protein BP-73 (375 aa).

Disordered regions lie at residues 46–113, 130–233, and 257–315; these read PNNH…VPGE, RARG…VKFQ, and TLEN…PSLQ. Basic residues predominate over residues 59–70; that stretch reads HQKGGSARRKSK. Residues 76–86 show a composition bias toward acidic residues; the sequence is DDSENIDEFDT. Residues 88–109 are compositionally biased toward polar residues; that stretch reads IMSSKNGPPISLTSNSRPQATS. Composition is skewed to basic and acidic residues over residues 134-152 and 163-186; these read KGKE…ERGS and HSVD…KRSN. Polar residues predominate over residues 187–197; it reads ESGNKQNSSIF. Residues 295–311 are compositionally biased toward acidic residues; the sequence is DEPDASDTDEPSGEYDE. The interaction with WAXY stretch occupies residues 338–375; it reads DLSTLKVTELRELAKSRGIKGYSKMKKNDLVELLSNMA.

In terms of assembly, binds to the DNA in the promoter region of WAXY containing the sequence 5'-ACGCACGCTAACGTGA-3'. As to expression, expressed in tissues with high cell division activities: in root tips, stem node, panicle, flower and immature seed. Weakly expressed in root and leaf.

Functionally, may regulate cell proliferation and plant growth. The sequence is that of SAP-like protein BP-73 (BP-73) from Oryza sativa subsp. japonica (Rice).